A 245-amino-acid polypeptide reads, in one-letter code: Tetrahydromethanopterin S-methyltransferase subunit A 1 (245 aa).

Residues 1–222 (MADKKPAADN…AGNYSGKVQG (222 aa)) are Cytoplasmic-facing. His-84 contributes to the 5-hydroxybenzimidazolylcob(I)amide binding site. The chain crosses the membrane as a helical span at residues 223 to 243 (IMIGLIFTLVIGFLLLMAPLL). Topologically, residues 244-245 (GA) are extracellular.

Belongs to the MtrA family. In terms of assembly, the complex is composed of 8 subunits; MtrA, MtrB, MtrC, MtrD, MtrE, MtrF, MtrG and MtrH. 5-hydroxybenzimidazolylcob(I)amide is required as a cofactor.

The protein resides in the cell membrane. It catalyses the reaction 5-methyl-5,6,7,8-tetrahydromethanopterin + coenzyme M + 2 Na(+)(in) = 5,6,7,8-tetrahydromethanopterin + methyl-coenzyme M + 2 Na(+)(out). The protein operates within one-carbon metabolism; methanogenesis from CO(2); methyl-coenzyme M from 5,10-methylene-5,6,7,8-tetrahydromethanopterin: step 2/2. Its function is as follows. Part of a complex that catalyzes the formation of methyl-coenzyme M and tetrahydromethanopterin from coenzyme M and methyl-tetrahydromethanopterin. This is an energy-conserving, sodium-ion translocating step. The sequence is that of Tetrahydromethanopterin S-methyltransferase subunit A 1 from Methanobrevibacter ruminantium (strain ATCC 35063 / DSM 1093 / JCM 13430 / OCM 146 / M1) (Methanobacterium ruminantium).